Reading from the N-terminus, the 697-residue chain is MTEHKVNVEFGGRTITIATGKWAKQASGAVVVSCGDTVVLVTAVATKSAREGQDFFPLTVNYQEKAYAGGKIPGGFFKREGRPSDNETLTSRFIDRPIRPLFPESFLNDTQIMATVVSADQDNDPGILAMIGASAALEVSDIPFLGPIAGVKVGRVDGQFVCNPTVEQLEKSDLEIVVAASRDAVIMVEGGAAEASEKDVLEAIFFGHAAVQPIIEAQTDLRKLAGVPKREVAATSVDEALKTRVKDLAYAGIKEAVRIVAKQERHNRIGEITAQTLETLLPEYEGRESEIKGFLGDFEYELVREHIIKDGYRIDGRDTTTIRPISIEVSMLPRAHGSALFTRGETQALVASTLGTSIDEQRIDSLYGETRKRFLLHYNFPPFSVGETSFRLAPGRREIGHGMLAERALERVVPKHEDFPYTIRIVSDILESNGSSSMATVCGGALAMMDAGVPIKAPVAGIAMGLIKEGEGIAILSDILGDEDHLGDMDFKVAGTEAGVTAIQMDIKITGVTREIMEKALLQARDGRLHILGKMNQAIAAPRTDLSPYAPRITTIWVKTDKIRDVIGSGGKNIRGITEATGVSIDIEDSGRINIASTSKEACDKAIKMIRDLTAEAEEGKLYMGTVKKVMDFGAFVEIFPGTDGLVHISELDTERVKNVTDVLNEGDKVLVKCIGIDKQGKIKLSRKEALGAVLPE.

Mg(2+)-binding residues include D484 and D490. In terms of domain architecture, KH spans 551 to 610 (PRITTIWVKTDKIRDVIGSGGKNIRGITEATGVSIDIEDSGRINIASTSKEACDKAIKMI). The 69-residue stretch at 620-688 (GKLYMGTVKK…KQGKIKLSRK (69 aa)) folds into the S1 motif domain.

It belongs to the polyribonucleotide nucleotidyltransferase family. Mg(2+) serves as cofactor.

The protein localises to the cytoplasm. The enzyme catalyses RNA(n+1) + phosphate = RNA(n) + a ribonucleoside 5'-diphosphate. In terms of biological role, involved in mRNA degradation. Catalyzes the phosphorolysis of single-stranded polyribonucleotides processively in the 3'- to 5'-direction. This chain is Polyribonucleotide nucleotidyltransferase, found in Geobacter sulfurreducens (strain ATCC 51573 / DSM 12127 / PCA).